The following is a 346-amino-acid chain: tRNA N6-adenosine threonylcarbamoyltransferase (346 aa).

2 residues coordinate Fe cation: His-111 and His-115. Substrate is bound by residues 134–138, Asp-167, Gly-180, Asp-184, and Asn-279; that span reads LVSGG. Asp-307 is a Fe cation binding site.

The protein belongs to the KAE1 / TsaD family. Fe(2+) serves as cofactor.

It localises to the cytoplasm. It carries out the reaction L-threonylcarbamoyladenylate + adenosine(37) in tRNA = N(6)-L-threonylcarbamoyladenosine(37) in tRNA + AMP + H(+). Its function is as follows. Required for the formation of a threonylcarbamoyl group on adenosine at position 37 (t(6)A37) in tRNAs that read codons beginning with adenine. Is involved in the transfer of the threonylcarbamoyl moiety of threonylcarbamoyl-AMP (TC-AMP) to the N6 group of A37, together with TsaE and TsaB. TsaD likely plays a direct catalytic role in this reaction. This chain is tRNA N6-adenosine threonylcarbamoyltransferase, found in Gloeothece citriformis (strain PCC 7424) (Cyanothece sp. (strain PCC 7424)).